Reading from the N-terminus, the 294-residue chain is Shikimate dehydrogenase (NADP(+)) (294 aa).

Shikimate-binding positions include 23 to 25 (SRS) and Thr-76. Lys-80 functions as the Proton acceptor in the catalytic mechanism. Shikimate-binding residues include Asn-101 and Asp-116. Residues 141-145 (GAGGA) and Met-233 each bind NADP(+). A shikimate-binding site is contributed by Tyr-235. Residue Gly-256 participates in NADP(+) binding.

This sequence belongs to the shikimate dehydrogenase family. In terms of assembly, homodimer.

The catalysed reaction is shikimate + NADP(+) = 3-dehydroshikimate + NADPH + H(+). It functions in the pathway metabolic intermediate biosynthesis; chorismate biosynthesis; chorismate from D-erythrose 4-phosphate and phosphoenolpyruvate: step 4/7. In terms of biological role, involved in the biosynthesis of the chorismate, which leads to the biosynthesis of aromatic amino acids. Catalyzes the reversible NADPH linked reduction of 3-dehydroshikimate (DHSA) to yield shikimate (SA). The chain is Shikimate dehydrogenase (NADP(+)) from Methylibium petroleiphilum (strain ATCC BAA-1232 / LMG 22953 / PM1).